A 365-amino-acid polypeptide reads, in one-letter code: NAD(P)H-quinone oxidoreductase subunit 1, chloroplastic (365 aa).

Transmembrane regions (helical) follow at residues 29 to 49 (IWLLVPIFTLILVIIIGVLVI), 106 to 126 (IAVISTLLSYLVIPFGYHLVL), 129 to 149 (LSIGVFLWIAISSIAPIGLLM), 250 to 270 (YSGIKFGLFYVASYLNLLVSS), 302 to 322 (IFGMTIGILITLAKAYLFLFI), and 338 to 358 (LLNLGWKFLLPISLGNLLLTT).

The protein belongs to the complex I subunit 1 family. NDH is composed of at least 16 different subunits, 5 of which are encoded in the nucleus.

The protein resides in the plastid. The protein localises to the chloroplast thylakoid membrane. It carries out the reaction a plastoquinone + NADH + (n+1) H(+)(in) = a plastoquinol + NAD(+) + n H(+)(out). The catalysed reaction is a plastoquinone + NADPH + (n+1) H(+)(in) = a plastoquinol + NADP(+) + n H(+)(out). Its function is as follows. NDH shuttles electrons from NAD(P)H:plastoquinone, via FMN and iron-sulfur (Fe-S) centers, to quinones in the photosynthetic chain and possibly in a chloroplast respiratory chain. The immediate electron acceptor for the enzyme in this species is believed to be plastoquinone. Couples the redox reaction to proton translocation, and thus conserves the redox energy in a proton gradient. This is NAD(P)H-quinone oxidoreductase subunit 1, chloroplastic from Acorus calamus (Sweet flag).